Here is a 662-residue protein sequence, read N- to C-terminus: Probable quinol oxidase subunit 1 (662 aa).

Helical transmembrane passes span 14-34 and 58-78; these read WMITMAQIGAPFLVIGLIAVI and IMYLICAVLMFVRGGIDALLI. His-102 is a binding site for Fe(II)-heme a. Transmembrane regions (helical) follow at residues 103 to 123, 140 to 160, 187 to 207, 228 to 248, 273 to 293, 311 to 331, 336 to 356, and 376 to 396; these read GVIMIIFMAMPFIFGLWNIVV, VSFWLFFAGMILFNLSFIIGG, IAIQISGLGTLATGINFFVTI, FITTLIVILAFPPLTVALALM, FFWVWGHPEVYIVILPAFGIY, MVWATAGIAFLSFLVWVHHFF, GALINSFFSISTMLIGIPTGV, and MLFSLAFIPNFLLGGVTGVML. Residues His-279, Tyr-283, His-328, and His-329 each contribute to the Cu cation site. A cross-link (1'-histidyl-3'-tyrosine (His-Tyr)) is located at residues 279-283; it reads HPEVY. His-414 serves as a coordination point for heme a3. A run of 5 helical transmembrane segments spans residues 415-435, 451-471, 493-513, 587-604, and 608-627; these read FHYTLVTGVVFACLAGLIFWY, CFWFFMIGFNVCFLPQFILGL, ISTIGALLMAIGFLFLVVSIV, PVGFWIGIFMTIGGFFLI, and VIPALICLFGIFGTMIYRSF. His-416 is a binding site for Fe(II)-heme a.

Belongs to the heme-copper respiratory oxidase family. Cu cation is required as a cofactor. Ferriheme a serves as cofactor. It depends on Heme A3. as a cofactor.

It localises to the cell membrane. The enzyme catalyses 2 a quinol + O2 = 2 a quinone + 2 H2O. The protein operates within energy metabolism; oxidative phosphorylation. Functionally, catalyzes quinol oxidation with the concomitant reduction of oxygen to water. The protein is Probable quinol oxidase subunit 1 (qoxB) of Staphylococcus aureus (strain MRSA252).